Reading from the N-terminus, the 216-residue chain is Sugar fermentation stimulation protein homolog (216 aa).

This sequence belongs to the SfsA family.

This Thermoplasma volcanium (strain ATCC 51530 / DSM 4299 / JCM 9571 / NBRC 15438 / GSS1) protein is Sugar fermentation stimulation protein homolog.